The following is a 152-amino-acid chain: MPGKGDAPVLPGARAVARYVRISPMKARRVVNLVRGLPAKEALTVLQFAPQAASEQVYKVLASAIANAENNERLDPDALLVSEAYVDEGPTMKRFQPRAQGRAYRIRKRTCHITVVVEAVAPAAPKKAAAKKAAPAKETTPAATESKTEGAE.

The segment covering 124–145 (APKKAAAKKAAPAKETTPAATE) has biased composition (low complexity). The segment at 124–152 (APKKAAAKKAAPAKETTPAATESKTEGAE) is disordered.

Belongs to the universal ribosomal protein uL22 family. In terms of assembly, part of the 50S ribosomal subunit.

In terms of biological role, this protein binds specifically to 23S rRNA; its binding is stimulated by other ribosomal proteins, e.g. L4, L17, and L20. It is important during the early stages of 50S assembly. It makes multiple contacts with different domains of the 23S rRNA in the assembled 50S subunit and ribosome. Functionally, the globular domain of the protein is located near the polypeptide exit tunnel on the outside of the subunit, while an extended beta-hairpin is found that lines the wall of the exit tunnel in the center of the 70S ribosome. The sequence is that of Large ribosomal subunit protein uL22 from Salinispora tropica (strain ATCC BAA-916 / DSM 44818 / JCM 13857 / NBRC 105044 / CNB-440).